A 252-amino-acid chain; its full sequence is Redox-sensing transcriptional repressor Rex (252 aa).

Positions 26 to 65 (LYLRALTALSERSVPTVSSEELAAAAGVNSAKLRKDFSYL) form a DNA-binding region, H-T-H motif. 100–105 (GIGNLG) serves as a coordination point for NAD(+). The interval 222-252 (EAAAEGAIPAAASKESADKGPDGDVPAVMPA) is disordered.

Belongs to the transcriptional regulatory Rex family. Homodimer.

It is found in the cytoplasm. Functionally, modulates transcription in response to changes in cellular NADH/NAD(+) redox state. This Streptomyces avermitilis (strain ATCC 31267 / DSM 46492 / JCM 5070 / NBRC 14893 / NCIMB 12804 / NRRL 8165 / MA-4680) protein is Redox-sensing transcriptional repressor Rex.